The sequence spans 417 residues: Candidapepsin-4 (417 aa).

An N-terminal signal peptide occupies residues 1–18; the sequence is MFLQNILSVLAFALLIDA. Residues 19 to 75 constitute a propeptide, activation peptide; the sequence is APVKRSTGFVTLDFNVKRSLVDPKDPTVEVKRSPLFLDIEPTEIPVDDTGRNDVGKR. A Peptidase A1 domain is found at 89–403; it reads YSADITIGSN…DLDDRKISMA (315 aa). Residue Asp107 is part of the active site. A disulfide bridge connects residues Cys122 and Cys134. An N-linked (GlcNAc...) asparagine glycan is attached at Asn137. The active site involves Asp293. An intrachain disulfide couples Cys331 to Cys369.

This sequence belongs to the peptidase A1 family. Post-translationally, O-glycosylated.

The protein localises to the secreted. It carries out the reaction Preferential cleavage at the carboxyl of hydrophobic amino acids, but fails to cleave 15-Leu-|-Tyr-16, 16-Tyr-|-Leu-17 and 24-Phe-|-Phe-25 of insulin B chain. Activates trypsinogen, and degrades keratin.. This chain is Candidapepsin-4 (SAP4), found in Candida albicans (strain WO-1) (Yeast).